The primary structure comprises 422 residues: Serpin A11 (422 aa).

The N-terminal stretch at M1 to A24 is a signal peptide. A disordered region spans residues H25–P45. N106, N169, N350, and N385 each carry an N-linked (GlcNAc...) asparagine glycan.

It belongs to the serpin family.

It localises to the secreted. This is Serpin A11 (Serpina11) from Rattus norvegicus (Rat).